Here is a 701-residue protein sequence, read N- to C-terminus: Elongation factor G (701 aa).

The 283-residue stretch at 8–290 folds into the tr-type G domain; it reads SRYRNIGISA…AVIEYLPAPT (283 aa). GTP is bound by residues 17 to 24, 88 to 92, and 142 to 145; these read AHIDAGKT, DTPGH, and NKMD.

This sequence belongs to the TRAFAC class translation factor GTPase superfamily. Classic translation factor GTPase family. EF-G/EF-2 subfamily.

The protein resides in the cytoplasm. In terms of biological role, catalyzes the GTP-dependent ribosomal translocation step during translation elongation. During this step, the ribosome changes from the pre-translocational (PRE) to the post-translocational (POST) state as the newly formed A-site-bound peptidyl-tRNA and P-site-bound deacylated tRNA move to the P and E sites, respectively. Catalyzes the coordinated movement of the two tRNA molecules, the mRNA and conformational changes in the ribosome. The protein is Elongation factor G of Actinobacillus pleuropneumoniae serotype 5b (strain L20).